We begin with the raw amino-acid sequence, 137 residues long: BolA-like protein 1 (137 aa).

Position 81 is a phosphoserine (serine 81). Positions 115-137 are disordered; it reads RENPQLDISPPCLGGSKKTRGTS.

Belongs to the BolA/IbaG family. As to quaternary structure, interacts with GLRX5.

Its subcellular location is the mitochondrion. Its function is as follows. Acts as a mitochondrial iron-sulfur (Fe-S) cluster assembly factor that facilitates (Fe-S) cluster insertion into a subset of mitochondrial proteins. Probably acts together with the monothiol glutaredoxin GLRX5. May protect cells against oxidative stress. In Mus musculus (Mouse), this protein is BolA-like protein 1 (Bola1).